We begin with the raw amino-acid sequence, 137 residues long: Putative pre-16S rRNA nuclease (137 aa).

This sequence belongs to the YqgF nuclease family.

Its subcellular location is the cytoplasm. Its function is as follows. Could be a nuclease involved in processing of the 5'-end of pre-16S rRNA. In Anaeromyxobacter sp. (strain K), this protein is Putative pre-16S rRNA nuclease.